The sequence spans 41 residues: Large ribosomal subunit protein bL36 (41 aa).

This sequence belongs to the bacterial ribosomal protein bL36 family.

This chain is Large ribosomal subunit protein bL36, found in Edwardsiella ictaluri (strain 93-146).